A 187-amino-acid polypeptide reads, in one-letter code: MYLQVETRTSSRLHLKRAPGIRSWSLLVGILSIGLAAAYYSGDSLGWKLFYVTGCLFVAVQNLEDWEEAIFDKSTGKVVLKTFSLYKKLLTLFRAGHDQVVVLLHDVRDVSVEEEKVRYFGKGYMVVLRLATGFSHPLTQSAVMGHRSDVEAIAKLITSFLELHCLESPTELSQSSDSEAGDPASQS.

A helical membrane pass occupies residues 20–42 (GIRSWSLLVGILSIGLAAAYYSG). Ser168 is modified (phosphoserine).

The protein belongs to the CYBC1 family. Interacts with CYBB; CYBC1 may act as a chaperone stabilizing Cytochrome b-245 heterodimer. In terms of tissue distribution, highly expressed in macrophages, neutrophils and monocytes.

It localises to the endoplasmic reticulum membrane. Functionally, functions as a chaperone necessary for a stable expression of the CYBA and CYBB subunits of the cytochrome b-245 heterodimer. Controls the phagocyte respiratory burst and is essential for innate immunity. This is Cytochrome b-245 chaperone 1 from Homo sapiens (Human).